A 153-amino-acid polypeptide reads, in one-letter code: MPSPGLVMESGQVLPAFLLCSTLLVIKMYAVAVITGQMRLRKKAFANPEDALKRGGLQYYRSDPDVERCLRAHRNDMETIYPFLFLGFVYSFLGPNPLIAWIHFLVVLTGRVVHTVAYLGKLNPRLRSGAYVLAQFSCFSMALQILWEVAHHL.

Residues 1–13 (MPSPGLVMESGQV) lie on the Lumenal side of the membrane. A helical membrane pass occupies residues 14-42 (LPAFLLCSTLLVIKMYAVAVITGQMRLRK). Arg39 lines the glutathione pocket. At 43-61 (KAFANPEDALKRGGLQYYR) the chain is on the cytoplasmic side. A helical membrane pass occupies residues 62-91 (SDPDVERCLRAHRNDMETIYPFLFLGFVYS). 74 to 78 (RNDME) contributes to the glutathione binding site. The Lumenal portion of the chain corresponds to 92–96 (FLGPN). A helical transmembrane segment spans residues 97 to 120 (PLIAWIHFLVVLTGRVVHTVAYLG). Positions 114 and 118 each coordinate glutathione. Residues 121 to 124 (KLNP) lie on the Cytoplasmic side of the membrane. The helical transmembrane segment at 125 to 153 (RLRSGAYVLAQFSCFSMALQILWEVAHHL) threads the bilayer. 127-131 (RSGAY) is a glutathione binding site.

The protein belongs to the MAPEG family. Homotrimer. The cofactor is glutathione.

The protein resides in the membrane. It is found in the cytoplasm. Its subcellular location is the perinuclear region. The catalysed reaction is prostaglandin H2 = prostaglandin E2. It catalyses the reaction 2-glyceryl-prostaglandin H2 = 2-glyceryl-prostaglandin E2. It carries out the reaction prostaglandin G2 = (15S)-15-hydroperoxy-prostaglandin E2. The enzyme catalyses 1-chloro-2,4-dinitrobenzene + glutathione = 2,4-dinitrophenyl-S-glutathione + chloride + H(+). The catalysed reaction is (5S)-hydroperoxy-(6E,8Z,11Z,14Z)-eicosatetraenoate + 2 glutathione = (5S)-hydroxy-(6E,8Z,11Z,14Z)-eicosatetraenoate + glutathione disulfide + H2O. It participates in lipid metabolism; prostaglandin biosynthesis. Activity is increased markedly in macrophages and osteoblasts following pro-inflammatory stimuli. Functionally, terminal enzyme of the cyclooxygenase (COX)-2-mediated prostaglandin E2 (PGE2) biosynthetic pathway. Catalyzes the glutathione-dependent oxidoreduction of prostaglandin endoperoxide H2 (PGH2) to prostaglandin E2 (PGE2) in response to inflammatory stimuli. Plays a key role in inflammation response, fever and pain. Also catalyzes the oxidoreduction of endocannabinoids into prostaglandin glycerol esters and PGG2 into 15-hydroperoxy-PGE2. In addition, displays low glutathione transferase and glutathione-dependent peroxidase activities, toward 1-chloro-2,4-dinitrobenzene and 5-hydroperoxyicosatetraenoic acid (5-HPETE), respectively. The chain is Prostaglandin E synthase (Ptges) from Mus musculus (Mouse).